Here is a 526-residue protein sequence, read N- to C-terminus: Glutamate--cysteine ligase (526 aa).

Belongs to the glutamate--cysteine ligase type 1 family. Type 1 subfamily.

The enzyme catalyses L-cysteine + L-glutamate + ATP = gamma-L-glutamyl-L-cysteine + ADP + phosphate + H(+). Its pathway is sulfur metabolism; glutathione biosynthesis; glutathione from L-cysteine and L-glutamate: step 1/2. The chain is Glutamate--cysteine ligase from Proteus mirabilis (strain HI4320).